We begin with the raw amino-acid sequence, 210 residues long: Pyridoxine/pyridoxamine 5'-phosphate oxidase (210 aa).

Substrate is bound by residues R7–Y10 and K65. FMN contacts are provided by residues R60–K65, F75–T76, R81, K82, and Q104. Residues Y122, R126, and S130 each coordinate substrate. Residues Q139–S140 and W183 contribute to the FMN site. Substrate is bound at residue R189–H191. R193 is an FMN binding site.

Belongs to the pyridoxamine 5'-phosphate oxidase family. In terms of assembly, homodimer. FMN serves as cofactor.

The catalysed reaction is pyridoxamine 5'-phosphate + O2 + H2O = pyridoxal 5'-phosphate + H2O2 + NH4(+). The enzyme catalyses pyridoxine 5'-phosphate + O2 = pyridoxal 5'-phosphate + H2O2. Its pathway is cofactor metabolism; pyridoxal 5'-phosphate salvage; pyridoxal 5'-phosphate from pyridoxamine 5'-phosphate: step 1/1. It functions in the pathway cofactor metabolism; pyridoxal 5'-phosphate salvage; pyridoxal 5'-phosphate from pyridoxine 5'-phosphate: step 1/1. Its function is as follows. Catalyzes the oxidation of either pyridoxine 5'-phosphate (PNP) or pyridoxamine 5'-phosphate (PMP) into pyridoxal 5'-phosphate (PLP). The sequence is that of Pyridoxine/pyridoxamine 5'-phosphate oxidase from Neisseria meningitidis serogroup A / serotype 4A (strain DSM 15465 / Z2491).